Reading from the N-terminus, the 116-residue chain is Large ribosomal subunit protein bL17 (116 aa).

This sequence belongs to the bacterial ribosomal protein bL17 family. Part of the 50S ribosomal subunit. Contacts protein L32.

The protein is Large ribosomal subunit protein bL17 of Trichodesmium erythraeum (strain IMS101).